The sequence spans 108 residues: Sperm-egg fusion protein LLCFC1 (108 aa).

A signal peptide spans 1-30 (MTSLGSQLHRATFLTALLLLLLLQVKGVKT). A compositionally biased stretch (basic and acidic residues) spans 39–49 (GDKSQKDKVSS). The segment at 39-64 (GDKSQKDKVSSEDQGEEEYEEHFEAS) is disordered.

As to expression, detected in testicular germ cells and spermatozoa (at protein level). Abundantly expressed in testis.

It localises to the secreted. Functionally, sperm protein required for fusion of sperm with the egg membrane during fertilization. This chain is Sperm-egg fusion protein LLCFC1, found in Mus musculus (Mouse).